A 485-amino-acid polypeptide reads, in one-letter code: ATP synthase subunit beta (485 aa).

170 to 177 contacts ATP; sequence GGAGVGKT.

Belongs to the ATPase alpha/beta chains family. As to quaternary structure, F-type ATPases have 2 components, CF(1) - the catalytic core - and CF(0) - the membrane proton channel. CF(1) has five subunits: alpha(3), beta(3), gamma(1), delta(1), epsilon(1). CF(0) has three main subunits: a(1), b(2) and c(9-12). The alpha and beta chains form an alternating ring which encloses part of the gamma chain. CF(1) is attached to CF(0) by a central stalk formed by the gamma and epsilon chains, while a peripheral stalk is formed by the delta and b chains.

It is found in the cell membrane. The catalysed reaction is ATP + H2O + 4 H(+)(in) = ADP + phosphate + 5 H(+)(out). Produces ATP from ADP in the presence of a proton gradient across the membrane. The catalytic sites are hosted primarily by the beta subunits. This is ATP synthase subunit beta from Salinispora arenicola (strain CNS-205).